The chain runs to 490 residues: MTQWEVVIGLETHAQLSTVSKIFSGASTQFGAQPNTQACPVDLALPGVLPVLNRGAVERAIRFGLAIGATVAPRSVFARKNYFYPDLPKGYQISQYEIPVVQGGQITIQVPANEKAGKQAYSKTVNLTRAHLEEDAGKSLHEDFAGMTGIDLNRAGTPLLEIVTEPEMRSAAEAVAYAKALHGLVMWLGICDGNMQEGSFRCDANVSVRPVGQEKFGTRAEIKNLNSFRFLEDAINYEVRRQIELIEDGGEVVQETRLYDPDKRETRSMRSKEDAHDYRYFPDPDLMPLVIGADWIARVKGEMPELPAVMQQRFIEQYGVSAYDAGVLTSTKAMAEYFEALVAKAGAANAKLAANWLMGDVSSQLNRDGIDIDACPVSAAQLALVLQRIADGTISNKIAKEIFVTIWDEKAADEGAADRIIEAKGLKQISDTGALEAIIDEVLAANAKSVEEFRAGKDKAFNALVGQAMKATKGKANPQQVNELLKKKLG.

It belongs to the GatB/GatE family. GatB subfamily. In terms of assembly, heterotrimer of A, B and C subunits.

The catalysed reaction is L-glutamyl-tRNA(Gln) + L-glutamine + ATP + H2O = L-glutaminyl-tRNA(Gln) + L-glutamate + ADP + phosphate + H(+). It carries out the reaction L-aspartyl-tRNA(Asn) + L-glutamine + ATP + H2O = L-asparaginyl-tRNA(Asn) + L-glutamate + ADP + phosphate + 2 H(+). Allows the formation of correctly charged Asn-tRNA(Asn) or Gln-tRNA(Gln) through the transamidation of misacylated Asp-tRNA(Asn) or Glu-tRNA(Gln) in organisms which lack either or both of asparaginyl-tRNA or glutaminyl-tRNA synthetases. The reaction takes place in the presence of glutamine and ATP through an activated phospho-Asp-tRNA(Asn) or phospho-Glu-tRNA(Gln). This is Aspartyl/glutamyl-tRNA(Asn/Gln) amidotransferase subunit B from Burkholderia mallei (strain NCTC 10247).